The sequence spans 186 residues: Elongation factor P (186 aa).

Arg-32 carries N-alpha-linked (Rha) arginine glycosylation.

It belongs to the elongation factor P family. Post-translationally, glycosylated ar Arg-32 by EarP: arginine rhamnosylation is required for EF-P function and rescue of polyproline stalled ribosomes.

The protein resides in the cytoplasm. It functions in the pathway protein biosynthesis; polypeptide chain elongation. Involved in peptide bond synthesis. Stimulates efficient translation and peptide-bond synthesis on native or reconstituted 70S ribosomes in vitro. Probably functions indirectly by altering the affinity of the ribosome for aminoacyl-tRNA, thus increasing their reactivity as acceptors for peptidyl transferase. The protein is Elongation factor P of Shewanella oneidensis (strain ATCC 700550 / JCM 31522 / CIP 106686 / LMG 19005 / NCIMB 14063 / MR-1).